Here is a 162-residue protein sequence, read N- to C-terminus: Phosphopantetheine adenylyltransferase (162 aa).

Threonine 9 provides a ligand contact to substrate. ATP-binding positions include 9-10 (TF) and histidine 17. Substrate-binding residues include lysine 41, leucine 77, and arginine 91. ATP-binding positions include 92 to 94 (GLR), glutamate 102, and 127 to 133 (RQAIASK).

This sequence belongs to the bacterial CoaD family. In terms of assembly, homohexamer. The cofactor is Mg(2+).

Its subcellular location is the cytoplasm. The enzyme catalyses (R)-4'-phosphopantetheine + ATP + H(+) = 3'-dephospho-CoA + diphosphate. The protein operates within cofactor biosynthesis; coenzyme A biosynthesis; CoA from (R)-pantothenate: step 4/5. Functionally, reversibly transfers an adenylyl group from ATP to 4'-phosphopantetheine, yielding dephospho-CoA (dPCoA) and pyrophosphate. This is Phosphopantetheine adenylyltransferase from Cereibacter sphaeroides (strain ATCC 17025 / ATH 2.4.3) (Rhodobacter sphaeroides).